The following is a 531-amino-acid chain: Ribosomal protein uS12 methylthiotransferase RimO (531 aa).

Polar residues-rich tracts occupy residues 1-19 (MPNI…SQPA) and 55-67 (HNQN…SSEV). The interval 1–77 (MPNISTESVN…VSAASAKTTT (77 aa)) is disordered. Positions 68–77 (VSAASAKTTT) are enriched in low complexity. Residues 88–198 (PKIGFVSLGC…VIRAVALHVP (111 aa)) enclose the MTTase N-terminal domain. The [4Fe-4S] cluster site is built by cysteine 97, cysteine 133, cysteine 162, cysteine 236, cysteine 240, and cysteine 243. The region spanning 222–459 (LTPSHYAYLK…MTLQQDISAQ (238 aa)) is the Radical SAM core domain. Positions 462–531 (QEKIGKTLMV…EYDLFASYKG (70 aa)) constitute a TRAM domain.

It belongs to the methylthiotransferase family. RimO subfamily. The cofactor is [4Fe-4S] cluster.

The protein resides in the cytoplasm. The catalysed reaction is L-aspartate(89)-[ribosomal protein uS12]-hydrogen + (sulfur carrier)-SH + AH2 + 2 S-adenosyl-L-methionine = 3-methylsulfanyl-L-aspartate(89)-[ribosomal protein uS12]-hydrogen + (sulfur carrier)-H + 5'-deoxyadenosine + L-methionine + A + S-adenosyl-L-homocysteine + 2 H(+). Its function is as follows. Catalyzes the methylthiolation of an aspartic acid residue of ribosomal protein uS12. The polypeptide is Ribosomal protein uS12 methylthiotransferase RimO (Psychrobacter cryohalolentis (strain ATCC BAA-1226 / DSM 17306 / VKM B-2378 / K5)).